The chain runs to 120 residues: Large ribosomal subunit protein uL18 (120 aa).

This sequence belongs to the universal ribosomal protein uL18 family. Part of the 50S ribosomal subunit; part of the 5S rRNA/L5/L18/L25 subcomplex. Contacts the 5S and 23S rRNAs.

Functionally, this is one of the proteins that bind and probably mediate the attachment of the 5S RNA into the large ribosomal subunit, where it forms part of the central protuberance. In Treponema pallidum (strain Nichols), this protein is Large ribosomal subunit protein uL18.